A 416-amino-acid chain; its full sequence is Putative gustatory receptor 57a (416 aa).

Over Met-1–Val-13 the chain is Cytoplasmic. The chain crosses the membrane as a helical span at residues Phe-14 to Ile-34. Over Arg-35–Tyr-48 the chain is Extracellular. A helical transmembrane segment spans residues Ser-49–Ala-69. Topologically, residues Glu-70–Leu-83 are cytoplasmic. Residues Val-84 to Ile-104 traverse the membrane as a helical segment. Over Ser-105–Lys-143 the chain is Extracellular. The helical transmembrane segment at Asn-144–Val-164 threads the bilayer. Topologically, residues Gln-165 to Arg-171 are cytoplasmic. A helical membrane pass occupies residues Ala-172–Gly-192. At Tyr-193 to Arg-295 the chain is on the extracellular side. The N-linked (GlcNAc...) asparagine glycan is linked to Asn-290. The helical transmembrane segment at Met-296–Phe-316 threads the bilayer. At Tyr-317–Lys-374 the chain is on the cytoplasmic side. Residues Val-375–Met-395 form a helical membrane-spanning segment. Residues Thr-396–Phe-416 lie on the Extracellular side of the membrane.

The protein belongs to the insect chemoreceptor superfamily. Gustatory receptor (GR) family. Gr57a subfamily. In terms of tissue distribution, in larvae, is expressed in neurons of the terminal external chemosensory organ as well as in the dorsal pharyngeal sense organ.

It localises to the cell membrane. Functionally, probable gustatory receptor which mediates acceptance or avoidance behavior, depending on its substrates. In Drosophila melanogaster (Fruit fly), this protein is Putative gustatory receptor 57a (Gr57a).